The sequence spans 349 residues: Protein Wnt-7b (349 aa).

The first 24 residues, 1-24 (MHRNFRKWIFYVFLCFGVLYVKLG), serve as a signal peptide directing secretion. 5 cysteine pairs are disulfide-bonded: cysteine 73-cysteine 84, cysteine 123-cysteine 131, cysteine 133-cysteine 152, cysteine 200-cysteine 214, and cysteine 202-cysteine 209. Residues asparagine 83 and asparagine 127 are each glycosylated (N-linked (GlcNAc...) asparagine). The O-palmitoleoyl serine; by PORCN moiety is linked to residue serine 206. Residues 238–266 (VEVVRASRLRQPTFLRIKQLRSYQKPMET) are disordered linker. Cystine bridges form between cysteine 278/cysteine 309, cysteine 294/cysteine 304, cysteine 308/cysteine 348, cysteine 324/cysteine 339, cysteine 326/cysteine 336, and cysteine 331/cysteine 332. Residue asparagine 295 is glycosylated (N-linked (GlcNAc...) asparagine).

Belongs to the Wnt family. As to quaternary structure, forms a soluble 1:1 complex with AFM; this prevents oligomerization and is required for prolonged biological activity. The complex with AFM may represent the physiological form in body fluids. Interacts with FZD1 and FZD10. Interacts with FZD4 (in vitro). Interacts with PORCN. Interacts with glypican GPC3. Interacts (via intrinsically disordered linker region) with RECK; interaction with RECK confers ligand selectivity for Wnt7 in brain endothelial cells and allows these cells to selectively respond to Wnt7. Post-translationally, palmitoleoylation is required for efficient binding to frizzled receptors. Depalmitoleoylation leads to Wnt signaling pathway inhibition.

Its subcellular location is the secreted. It localises to the extracellular space. The protein localises to the extracellular matrix. Its function is as follows. Ligand for members of the frizzled family of seven transmembrane receptors that functions in the canonical Wnt/beta-catenin signaling pathway. Required for normal fusion of the chorion and the allantois during placenta development. Required for central nervous system (CNS) angiogenesis and blood-brain barrier regulation. In Mus musculus (Mouse), this protein is Protein Wnt-7b (Wnt7b).